The following is a 683-amino-acid chain: Translation factor guf1, mitochondrial (683 aa).

A mitochondrion-targeting transit peptide spans 1–43 (MRGCLQLARWLSAAPKGTAASLTRAPFVLANAPRYFTSSASRA). Residues 66–250 (ERYRNFCIVA…KIPAYGHFPV (185 aa)) form the tr-type G domain. GTP is bound by residues 75–82 (AHVDHGKS), 139–143 (DTPGH), and 193–196 (NKVD).

It belongs to the TRAFAC class translation factor GTPase superfamily. Classic translation factor GTPase family. LepA subfamily.

The protein resides in the mitochondrion inner membrane. The catalysed reaction is GTP + H2O = GDP + phosphate + H(+). In terms of biological role, promotes mitochondrial protein synthesis. May act as a fidelity factor of the translation reaction, by catalyzing a one-codon backward translocation of tRNAs on improperly translocated ribosomes. Binds to mitochondrial ribosomes in a GTP-dependent manner. The polypeptide is Translation factor guf1, mitochondrial (guf1) (Aspergillus fumigatus (strain ATCC MYA-4609 / CBS 101355 / FGSC A1100 / Af293) (Neosartorya fumigata)).